The following is a 96-amino-acid chain: Dynein light chain roadblock-type 1 (96 aa).

Position 2 is an N-acetylalanine (Ala2).

This sequence belongs to the GAMAD family. As to quaternary structure, homodimer. The cytoplasmic dynein 1 complex consists of two catalytic heavy chains (HCs) and a number of non-catalytic subunits presented by intermediate chains (ICs), light intermediate chains (LICs) and light chains (LCs); the composition seems to vary in respect to the IC, LIC and LC composition. The heavy chain homodimer serves as a scaffold for the probable homodimeric assembly of the respective non-catalytic subunits. The ICs and LICs bind directly to the HC dimer and the LCs assemble on the IC dimer. Interacts with DYNLRB2. Interacts with DYNC1I1 and DYNC1I2. Interacts with RAB6A isoform 1 (GTP-bound); the interaction is direct. Interacts with RAB6A isoform 2 (GDP-bound); the interaction is direct. Interacts with RAB6B (GDP-bound). High expression in heart, liver, brain and pancreas; moderate in placenta, skeletal muscle and kidney; low in lung, prostate, testis, small intestine and colon. Isoform 1 expression is up-regulated in 64% hepatocellular carcinoma (HCC) patients.

The protein localises to the cytoplasm. The protein resides in the cytoskeleton. In terms of biological role, acts as one of several non-catalytic accessory components of the cytoplasmic dynein 1 complex that are thought to be involved in linking dynein to cargos and to adapter proteins that regulate dynein function. Cytoplasmic dynein 1 acts as a motor for the intracellular retrograde motility of vesicles and organelles along microtubules. In Homo sapiens (Human), this protein is Dynein light chain roadblock-type 1.